The sequence spans 814 residues: Flagellar radial spoke protein 1 (814 aa).

Residue Arg-243 is modified to Asymmetric dimethylarginine. Residues 283 to 346 (VQSISTGNRE…PPPPAPKVDP (64 aa)) are disordered. Over residues 303 to 329 (PEEDEEEEKEEEKEEPEEGEEGEEGEG) the composition is skewed to acidic residues. Arg-428 bears the Asymmetric dimethylarginine mark. MORN repeat units follow at residues 577-597 (YFGS…FATG), 600-622 (YAGE…DGGT), 623-645 (YVGE…DGSV), 646-662 (YTGS…GVYW), 671-685 (GEWK…GTYE), and 691-707 (FEGE…ATYT). Positions 739–769 (GIPPGSGDEPQLDEEGQPIEDTDKPPLPAHP) are disordered. Acidic residues predominate over residues 748–758 (PQLDEEGQPIE).

In terms of processing, asymmetrically dimethylated at Arg-243 and Arg-428 during flagellum resorption. Probably methylated by PRMT1.

It localises to the cytoplasm. The protein localises to the cytoskeleton. It is found in the flagellum axoneme. Its function is as follows. Flagellar radial spokes contribute to the regulation of dynein arm activity and thus the pattern of flagellar bending. They consist of a thin stalk, which is attached to the a subfiber of the outer doublet microtubule, and a bulbous head, which is attached to the stalk and appears to interact with the projections from the central pair of microtubules. The protein is Flagellar radial spoke protein 1 of Chlamydomonas reinhardtii (Chlamydomonas smithii).